A 396-amino-acid polypeptide reads, in one-letter code: Elongation factor Tu (396 aa).

Residues 10 to 206 (KPHCNIGTIG…QVDAYIPQPE (197 aa)) form the tr-type G domain. The interval 19-26 (GHVDHGKT) is G1. Residue 19-26 (GHVDHGKT) coordinates GTP. Thr26 lines the Mg(2+) pocket. The interval 60 to 64 (GITIS) is G2. Residues 81–84 (DCPG) form a G3 region. GTP contacts are provided by residues 81-85 (DCPGH) and 136-139 (NKVD). The G4 stretch occupies residues 136–139 (NKVD). The G5 stretch occupies residues 174-176 (SAL).

This sequence belongs to the TRAFAC class translation factor GTPase superfamily. Classic translation factor GTPase family. EF-Tu/EF-1A subfamily. As to quaternary structure, monomer.

It is found in the cytoplasm. The enzyme catalyses GTP + H2O = GDP + phosphate + H(+). GTP hydrolase that promotes the GTP-dependent binding of aminoacyl-tRNA to the A-site of ribosomes during protein biosynthesis. This is Elongation factor Tu from Gluconobacter oxydans (strain 621H) (Gluconobacter suboxydans).